The primary structure comprises 64 residues: Small ribosomal subunit protein eS17 (64 aa).

It belongs to the eukaryotic ribosomal protein eS17 family.

This is Small ribosomal subunit protein eS17 from Methanococcoides burtonii (strain DSM 6242 / NBRC 107633 / OCM 468 / ACE-M).